The following is a 336-amino-acid chain: Corrinoid adenosyltransferase PduO (336 aa).

The segment at Met-1–Leu-185 is pduON. Residues Lys-194 to Gln-336 form a pduOC region. A heme-binding site is contributed by His-207. Mg(2+) is bound by residues Glu-215 and Gln-218.

The protein belongs to the Cob(I)alamin adenosyltransferase family. PduO subfamily. The C-terminal domain (PduOC) forms stable octamers and also crystallizes as an octamer. Forms a complex with PduS. Heme b is required as a cofactor. It depends on Mg(2+) as a cofactor.

The protein resides in the bacterial microcompartment. The enzyme catalyses cob(I)alamin-[corrinoid adenosyltransferase] + ATP = apo-[corrinoid adenosyltransferase] + adenosylcob(III)alamin + triphosphate. It participates in polyol metabolism; 1,2-propanediol degradation. It functions in the pathway cofactor biosynthesis; adenosylcobalamin biosynthesis. With respect to regulation, inhibited by ADP but not significantly by other nucleotides, inhibited by diphosphate and less well by triphosphate. Converts cob(I)alamin to adenosylcobalamin (adenosylcob(III)alamin), the cofactor for propanediol dehydratase. Found in the bacterial microcompartment (BMC) dedicated to 1,2-propanediol (1,2-PD) degradation. For adenosylcobalamin synthesis dATP can replace ATP, but no other nucleotides will substitute. PduS and PduO allow regeneration of the adenosylcobalamin cofactor within the BMC. Functionally, the 1,2-PD-specific bacterial microcompartment (BMC) concentrates low levels of 1,2-PD catabolic enzymes, concentrates volatile reaction intermediates thus enhancing pathway flux and keeps the level of toxic, mutagenic propionaldehyde low. This Salmonella typhimurium (strain LT2 / SGSC1412 / ATCC 700720) protein is Corrinoid adenosyltransferase PduO.